A 512-amino-acid polypeptide reads, in one-letter code: Mesoderm induction early response protein 1 (512 aa).

Residues 1-16 are compositionally biased toward low complexity; that stretch reads MAEPSVESSSPGGSAT. Disordered stretches follow at residues 1-63 and 75-173; these read MAEP…REGD and YGST…EDYI. Ser10 bears the Phosphoserine mark. The segment covering 17–36 has biased composition (basic and acidic residues); the sequence is SDDHEFDPSADMLVHDFDDE. 2 stretches are compositionally biased toward acidic residues: residues 37–46 and 83–105; these read RTLEEEEMME and EEDE…DNDD. Positions 129–144 are enriched in polar residues; the sequence is QSSNDDPSQSVASQDA. The residue at position 141 (Ser141) is a Phosphoserine. Residue Tyr155 is modified to Phosphotyrosine. A phosphoserine mark is found at Ser160 and Ser166. The segment covering 160-173 has biased composition (acidic residues); sequence SEVEEESEEDEDYI. One can recognise an ELM2 domain in the interval 180 to 278; sequence KEIMVGSMFQ…EALRRLRFNV (99 aa). The interaction with HDAC1 stretch occupies residues 180–284; that stretch reads KEIMVGSMFQ…RFNVKAAREE (105 aa). Residue Lys239 forms a Glycyl lysine isopeptide (Lys-Gly) (interchain with G-Cter in SUMO2) linkage. The 53-residue stretch at 283 to 335 folds into the SANT domain; sequence EELSVWTEEECRNFEQGLKAYGKDFHLIQANKVRTRSVGECVAFYYMWKKSER. A disordered region spans residues 366–512; that stretch reads ESESAASSRA…KFEELENTDD (147 aa). 3 positions are modified to phosphoserine: Ser367, Ser369, and Ser377. Residues 396 to 409 show a composition bias toward polar residues; sequence TVSTTNQNGVSSNG. Over residues 414–423 the composition is skewed to basic and acidic residues; that stretch reads LNKEEVKVEG. Residue Lys420 forms a Glycyl lysine isopeptide (Lys-Gly) (interchain with G-Cter in SUMO2) linkage. Position 448 is a phosphothreonine (Thr448). The span at 462 to 475 shows a compositional bias: basic and acidic residues; that stretch reads ARNENDFDEKSERP. Polar residues predominate over residues 482-494; the sequence is NSNGKESPGSSEF. Ser483, Ser488, and Ser491 each carry phosphoserine.

As to quaternary structure, interacts with HDAC1. Part of a complex containing at least CDYL, MIER1, MIER2, HDAC1 and HDAC2.

Its subcellular location is the nucleus. Transcriptional repressor regulating the expression of a number of genes including SP1 target genes. Probably functions through recruitment of HDAC1 a histone deacetylase involved in chromatin silencing. This is Mesoderm induction early response protein 1 (MIER1) from Pongo abelii (Sumatran orangutan).